The sequence spans 439 residues: Actin-related protein 3 (439 aa).

A disordered region spans residues 40–71 (PSAGTGGSGSGRPAVANKPSFLTGGAGPGGHL).

Belongs to the actin family. ARP3 subfamily. Component of the Arp2/3 complex composed.

The protein localises to the cytoplasm. The protein resides in the cytoskeleton. Its function is as follows. Functions as ATP-binding component of the Arp2/3 complex which is involved in regulation of actin polymerization and together with an activating nucleation-promoting factor (NPF) mediates the formation of branched actin networks. Seems to contact the pointed end of the daughter actin filament. The protein is Actin-related protein 3 (arp-3) of Neurospora crassa (strain ATCC 24698 / 74-OR23-1A / CBS 708.71 / DSM 1257 / FGSC 987).